Consider the following 358-residue polypeptide: Aminomethyltransferase (358 aa).

The protein belongs to the GcvT family. As to quaternary structure, the glycine cleavage system is composed of four proteins: P, T, L and H.

It carries out the reaction N(6)-[(R)-S(8)-aminomethyldihydrolipoyl]-L-lysyl-[protein] + (6S)-5,6,7,8-tetrahydrofolate = N(6)-[(R)-dihydrolipoyl]-L-lysyl-[protein] + (6R)-5,10-methylene-5,6,7,8-tetrahydrofolate + NH4(+). Its function is as follows. The glycine cleavage system catalyzes the degradation of glycine. The polypeptide is Aminomethyltransferase (Francisella tularensis subsp. mediasiatica (strain FSC147)).